Here is a 214-residue protein sequence, read N- to C-terminus: Large ribosomal subunit protein bL25 (214 aa).

The tract at residues 193-214 is disordered; that stretch reads PRAAAEEEDTGAEGDVEAADAE. A compositionally biased stretch (acidic residues) spans 198 to 214; the sequence is EEEDTGAEGDVEAADAE.

The protein belongs to the bacterial ribosomal protein bL25 family. CTC subfamily. Part of the 50S ribosomal subunit; part of the 5S rRNA/L5/L18/L25 subcomplex. Contacts the 5S rRNA. Binds to the 5S rRNA independently of L5 and L18.

Functionally, this is one of the proteins that binds to the 5S RNA in the ribosome where it forms part of the central protuberance. In Nitrosococcus oceani (strain ATCC 19707 / BCRC 17464 / JCM 30415 / NCIMB 11848 / C-107), this protein is Large ribosomal subunit protein bL25.